The primary structure comprises 471 residues: Ubiquitin carboxyl-terminal hydrolase calypso (471 aa).

Residues 45–276 (GWLELESDPG…IRFNLMAVVP (232 aa)) enclose the UCH catalytic domain. Catalysis depends on Cys-131, which acts as the Nucleophile. His-213 functions as the Proton donor in the catalytic mechanism. Coiled coils occupy residues 240-256 (WEDS…VMAE) and 298-324 (GTLQ…DTPT). The segment at 307 to 326 (DEQGESGNGDSQRPDTPTTL) is disordered. Over residues 314 to 326 (NGDSQRPDTPTTL) the composition is skewed to polar residues. In terms of domain architecture, ULD spans 375-403 (NYDKFICTFLSMLAHQGVLGELVSQHLLP). The interval 405-471 (KKVSGQGAAN…KGRNKCRKRK (67 aa)) is positively charged C-terminal tail required for binding nucleosomes. A disordered region spans residues 412-471 (AANRISKQSTTASAGGSTAAGTASTPKTQQQQAAAAKNGKSPSKTPGRRRKGRNKCRKRK). Residues 420-447 (STTASAGGSTAAGTASTPKTQQQQAAAA) show a composition bias toward low complexity. The span at 457–471 (PGRRRKGRNKCRKRK) shows a compositional bias: basic residues.

This sequence belongs to the peptidase C12 family. BAP1 subfamily. As to quaternary structure, catalytic component of the polycomb repressive deubiquitinase (PR-DUB) complex, at least composed of caly/calypso, Asx and sba (MBD5/6 homolog). The PR-DUB complex associates with nucleosomes to mediate deubiquitination of histone H2AK118ub1 substrates; the association requires the positively charged C-terminal tail of caly, probably due to direct binding of DNA. Interacts (via ULD domain) with Asx (via DEUBAD domain); the interaction produces a stable heterodimer with a composite binding site for ubiquitin. Homodimerizes (via coiled-coil hinge-region between the UCH and ULD domains) to mediate assembly of 2 copies of the caly-Asx heterodimer into a bisymmetric tetramer; dimerization enhances PR-DUB association with nucleosomes.

The protein resides in the nucleus. It catalyses the reaction Thiol-dependent hydrolysis of ester, thioester, amide, peptide and isopeptide bonds formed by the C-terminal Gly of ubiquitin (a 76-residue protein attached to proteins as an intracellular targeting signal).. Its function is as follows. Catalytic component of the polycomb repressive deubiquitinase (PR-DUB) complex, a complex that specifically mediates deubiquitination of histone H2A monoubiquitinated at 'Lys-119' (H2AK118ub1). Mediates bisymmetric organization of the PR-DUB complex and is involved in association with nucleosomes to mediate deubiquitination. Does not deubiquitinate monoubiquitinated histone H2B. Required to maintain the transcriptionally repressive state of homeotic genes throughout development. The PR-DUB complex has weak or no activity toward 'Lys-48'- and 'Lys-63'-linked polyubiquitin chains. Polycomb group (PcG) protein. The chain is Ubiquitin carboxyl-terminal hydrolase calypso from Drosophila melanogaster (Fruit fly).